The sequence spans 148 residues: Arginine repressor (148 aa).

The protein belongs to the ArgR family.

Its subcellular location is the cytoplasm. It functions in the pathway amino-acid biosynthesis; L-arginine biosynthesis [regulation]. Regulates arginine biosynthesis genes. This chain is Arginine repressor, found in Pelodictyon phaeoclathratiforme (strain DSM 5477 / BU-1).